The sequence spans 300 residues: Urease accessory protein UreD (300 aa).

Belongs to the UreD family. UreD, UreF and UreG form a complex that acts as a GTP-hydrolysis-dependent molecular chaperone, activating the urease apoprotein by helping to assemble the nickel containing metallocenter of UreC. The UreE protein probably delivers the nickel.

The protein resides in the cytoplasm. Required for maturation of urease via the functional incorporation of the urease nickel metallocenter. In Prochlorococcus marinus (strain AS9601), this protein is Urease accessory protein UreD.